Here is a 337-residue protein sequence, read N- to C-terminus: 4-hydroxy-3-methylbut-2-enyl diphosphate reductase (337 aa).

Cysteine 38 serves as a coordination point for [4Fe-4S] cluster. The (2E)-4-hydroxy-3-methylbut-2-enyl diphosphate site is built by histidine 67 and histidine 100. Positions 67 and 100 each coordinate dimethylallyl diphosphate. Residues histidine 67 and histidine 100 each contribute to the isopentenyl diphosphate site. Residue cysteine 122 participates in [4Fe-4S] cluster binding. Histidine 150 is a binding site for (2E)-4-hydroxy-3-methylbut-2-enyl diphosphate. Histidine 150 is a dimethylallyl diphosphate binding site. Histidine 150 contributes to the isopentenyl diphosphate binding site. The Proton donor role is filled by glutamate 152. Position 190 (threonine 190) interacts with (2E)-4-hydroxy-3-methylbut-2-enyl diphosphate. Cysteine 220 is a binding site for [4Fe-4S] cluster. Residues serine 248, serine 249, asparagine 250, and serine 293 each contribute to the (2E)-4-hydroxy-3-methylbut-2-enyl diphosphate site. Residues serine 248, serine 249, asparagine 250, and serine 293 each coordinate dimethylallyl diphosphate. Residues serine 248, serine 249, asparagine 250, and serine 293 each coordinate isopentenyl diphosphate.

It belongs to the IspH family. It depends on [4Fe-4S] cluster as a cofactor.

The catalysed reaction is isopentenyl diphosphate + 2 oxidized [2Fe-2S]-[ferredoxin] + H2O = (2E)-4-hydroxy-3-methylbut-2-enyl diphosphate + 2 reduced [2Fe-2S]-[ferredoxin] + 2 H(+). It carries out the reaction dimethylallyl diphosphate + 2 oxidized [2Fe-2S]-[ferredoxin] + H2O = (2E)-4-hydroxy-3-methylbut-2-enyl diphosphate + 2 reduced [2Fe-2S]-[ferredoxin] + 2 H(+). It functions in the pathway isoprenoid biosynthesis; dimethylallyl diphosphate biosynthesis; dimethylallyl diphosphate from (2E)-4-hydroxy-3-methylbutenyl diphosphate: step 1/1. The protein operates within isoprenoid biosynthesis; isopentenyl diphosphate biosynthesis via DXP pathway; isopentenyl diphosphate from 1-deoxy-D-xylulose 5-phosphate: step 6/6. Catalyzes the conversion of 1-hydroxy-2-methyl-2-(E)-butenyl 4-diphosphate (HMBPP) into a mixture of isopentenyl diphosphate (IPP) and dimethylallyl diphosphate (DMAPP). Acts in the terminal step of the DOXP/MEP pathway for isoprenoid precursor biosynthesis. This is 4-hydroxy-3-methylbut-2-enyl diphosphate reductase from Mycolicibacterium vanbaalenii (strain DSM 7251 / JCM 13017 / BCRC 16820 / KCTC 9966 / NRRL B-24157 / PYR-1) (Mycobacterium vanbaalenii).